A 906-amino-acid polypeptide reads, in one-letter code: Protein translocase subunit SecA (906 aa).

ATP-binding positions include glutamine 89, 107–111 (GEGKT), and aspartate 502. Zn(2+) is bound by residues cysteine 890, cysteine 892, cysteine 901, and histidine 902.

Belongs to the SecA family. As to quaternary structure, monomer and homodimer. Part of the essential Sec protein translocation apparatus which comprises SecA, SecYEG and auxiliary proteins SecDF-YajC and YidC. Zn(2+) is required as a cofactor.

Its subcellular location is the cell inner membrane. The protein localises to the cytoplasm. It catalyses the reaction ATP + H2O + cellular proteinSide 1 = ADP + phosphate + cellular proteinSide 2.. Its function is as follows. Part of the Sec protein translocase complex. Interacts with the SecYEG preprotein conducting channel. Has a central role in coupling the hydrolysis of ATP to the transfer of proteins into and across the cell membrane, serving both as a receptor for the preprotein-SecB complex and as an ATP-driven molecular motor driving the stepwise translocation of polypeptide chains across the membrane. This is Protein translocase subunit SecA from Brucella suis biovar 1 (strain 1330).